Consider the following 333-residue polypeptide: Glycerol-3-phosphate dehydrogenase [NAD(P)+] (333 aa).

NADPH contacts are provided by W13, K33, and K108. The sn-glycerol 3-phosphate site is built by K108 and G138. Position 142 (S142) interacts with NADPH. Residues K193, D246, S256, R257, and N258 each coordinate sn-glycerol 3-phosphate. The active-site Proton acceptor is the K193. R257 is a binding site for NADPH. 2 residues coordinate NADPH: V281 and E283.

It belongs to the NAD-dependent glycerol-3-phosphate dehydrogenase family.

It is found in the cytoplasm. The catalysed reaction is sn-glycerol 3-phosphate + NAD(+) = dihydroxyacetone phosphate + NADH + H(+). It carries out the reaction sn-glycerol 3-phosphate + NADP(+) = dihydroxyacetone phosphate + NADPH + H(+). It functions in the pathway membrane lipid metabolism; glycerophospholipid metabolism. Catalyzes the reduction of the glycolytic intermediate dihydroxyacetone phosphate (DHAP) to sn-glycerol 3-phosphate (G3P), the key precursor for phospholipid synthesis. The chain is Glycerol-3-phosphate dehydrogenase [NAD(P)+] from Bifidobacterium longum (strain NCC 2705).